Consider the following 431-residue polypeptide: Pyroglutamylated RF-amide peptide receptor (431 aa).

The Extracellular segment spans residues 1-46; that stretch reads MQALNITPEQFSRLLRDHNLTREQFIALYRLRPLVYTPELPGRAKL. Asparagine 19 carries an N-linked (GlcNAc...) asparagine glycan. A helical transmembrane segment spans residues 47–67; it reads ALVLTGVLIFALALFGNALVF. The Cytoplasmic portion of the chain corresponds to 68–81; sequence YVVTRSKAMRTVTN. A helical membrane pass occupies residues 82 to 102; the sequence is IFICSLALSDLLITFFCIPVT. The Extracellular segment spans residues 103 to 120; sequence MLQNISDNWLGGAFICKM. Residues 121 to 141 form a helical membrane-spanning segment; that stretch reads VPFVQSTAVVTEILTMTCIAV. The Cytoplasmic portion of the chain corresponds to 142 to 162; sequence ERHQGLVHPFKMKWQYTNRRA. A helical membrane pass occupies residues 163–183; that stretch reads FTMLGVVWLVAVIVGSPMWHV. The Extracellular segment spans residues 184-212; it reads QQLEIKYDFLYEKEHICCLEEWTSPVHQK. A helical membrane pass occupies residues 213–233; it reads IYTTFILVILFLLPLMVMLIL. At 234 to 271 the chain is on the cytoplasmic side; the sequence is YSKIGYELWIKKRVGDGSVLRTIHGKEMSKIARKKKRA. Residues 272–292 traverse the membrane as a helical segment; sequence VIMMVTVVALFAVCWAPFHVV. At 293 to 311 the chain is on the extracellular side; it reads HMMIEYSNFEKEYDDVTIK. A helical transmembrane segment spans residues 312–332; it reads MIFAIVQIIGFSNSICNPIVY. The Cytoplasmic portion of the chain corresponds to 333–431; the sequence is AFMNENFKKN…AENSPLDSGH (99 aa).

It belongs to the G-protein coupled receptor 1 family. Expressed widely in the brain with high levels in the hypothalamus, trigeminal ganglia and vestibular neurons, and moderate levels in the amygdala, cortex, pituitary, hippocampus, thalamus, caudate nucleus and medulla oblongata. In peripheral tissues, expressed at high levels in the retina and at moderate levels in the heart, kidney, testis and thyroid.

It localises to the cell membrane. In terms of biological role, receptor for the orexigenic neuropeptide QRFP. The activity of this receptor is mediated by G proteins that modulate adenylate cyclase activity and intracellular calcium levels. In Homo sapiens (Human), this protein is Pyroglutamylated RF-amide peptide receptor (QRFPR).